The sequence spans 254 residues: Alcohol dehydrogenase (254 aa).

Phe10 to Leu33 provides a ligand contact to NAD(+). Ser138 contacts substrate. The active-site Proton acceptor is Tyr151.

It belongs to the short-chain dehydrogenases/reductases (SDR) family. In terms of assembly, homodimer.

The enzyme catalyses a primary alcohol + NAD(+) = an aldehyde + NADH + H(+). It carries out the reaction a secondary alcohol + NAD(+) = a ketone + NADH + H(+). The sequence is that of Alcohol dehydrogenase (Adh) from Drosophila madeirensis (Fruit fly).